The sequence spans 78 residues: Large ribosomal subunit protein bL28 (78 aa).

The protein belongs to the bacterial ribosomal protein bL28 family.

The sequence is that of Large ribosomal subunit protein bL28 from Legionella pneumophila (strain Paris).